Consider the following 311-residue polypeptide: Sensor histidine kinase YcbM (311 aa).

A helical membrane pass occupies residues 1–21 (MTVLWVAAVIALACLNVIQFI). Residues 22–311 (MKKKRDGNLA…FTITLKRMTY (290 aa)) lie on the Cytoplasmic side of the membrane. A Histidine kinase domain is found at 92–310 (NMSHDLKTPL…AFTITLKRMT (219 aa)). His95 is modified (phosphohistidine; by autocatalysis).

The protein localises to the cell membrane. The enzyme catalyses ATP + protein L-histidine = ADP + protein N-phospho-L-histidine.. Member of the two-component regulatory system YcbM/YcbL. Probably activates YcbL by phosphorylation. This is Sensor histidine kinase YcbM (ycbM) from Bacillus subtilis (strain 168).